The primary structure comprises 311 residues: JNK1/MAPK8-associated membrane protein (311 aa).

Residues 1-57 (MAVDIQPACLGLYCGKTLLFKNGSTEIYGECGVCPRGQRTNAQKYCQPCTESPELYD) lie on the Lumenal side of the membrane. Asn-22 carries N-linked (GlcNAc...) asparagine glycosylation. Residues 58-78 (WLYLGFMAMLPLVLHWFFIEW) form a helical membrane-spanning segment. The Cytoplasmic segment spans residues 79–87 (YSGKKSSSA). A helical transmembrane segment spans residues 88–108 (LFQHITALFECSMAAIITLLV). The Lumenal segment spans residues 109 to 149 (SDPVGVLYIRSCRVLMLSDWYTMLYNPSPDYVTTVHCTHEA). Residues 150–170 (VYPLYTIVFIYYAFCLVLMML) form a helical membrane-spanning segment. The Cytoplasmic portion of the chain corresponds to 171–188 (LRPLLVKKIACGLGKSDR). Residues 189 to 209 (FKSIYAALYFFPILTVLQAVG) form a helical membrane-spanning segment. Gly-210 is a topological domain (lumenal). A helical transmembrane segment spans residues 211–231 (GLLYYAFPYIILVLSLVTLAV). Topologically, residues 232-250 (YMSASEIENCYDLLVRKKR) are cytoplasmic. A helical transmembrane segment spans residues 251 to 271 (LIVLFSHWLLHAYGIISISRV). Residues 272-277 (DKLEQD) are Lumenal-facing. A helical transmembrane segment spans residues 278-298 (LPLLALVPTPALFYLFTAKFT). Over 299–311 (EPSRILSEGANGH) the chain is Cytoplasmic.

Interacts with RNF5 and MAPK8, but not with MAPK9. Binding to MAPK8 occurs before and after exposure to stress, such as UV irradiation. After exposure to stress, interacts with phosphorylated MAPK8. Competes with DUSP10 for MAPK8 binding. Associates with multiple components of the proteasome and with ERAD regulatory proteins including AMFR/GP78, CANX, PSMC1, PSMC2, PSMC3/TBP1, PSMC5, PSMC6, PSMD8, SEC61-ALPHA and UFD1. Interacts with DERL1 (in the presence of misfolded protein CFTR(F508del)). In terms of processing, ubiquitinated by RNF5 via 'Lys-63'-linked ubiquitin linkage in a UBE2N-dependent manner. Ubiquitination decreases association with components of the proteasome and ERAD.

It localises to the endoplasmic reticulum membrane. Regulates the duration of MAPK8 activity in response to various stress stimuli. Facilitates degradation of misfolded endoplasmic reticulum (ER) proteins through the recruitment of components of the proteasome and endoplasmic reticulum-associated degradation (ERAD) system. This chain is JNK1/MAPK8-associated membrane protein (JKAMP), found in Homo sapiens (Human).